A 315-amino-acid chain; its full sequence is MSDSLRIIFAGTPDFAARHLDALLTSGHNVVGVFTQPDRPAGRGKKLMPSPVKVLAEEKGLPVFQPVSLRPQENQQLVADLHADVMVVVAYGLILPKAVLDMPRLGCINVHGSLLPRWRGAAPIQRSLWAGDAETGVTIMQMDVGLDTGDMLYKLACPITAEDTSGSLYNKLAELGPQGLITTLKQLADGTAAPEAQNEALVTHAEKLSKEEARIDWSLSAVQLERCIRAFNPWPMSWLEIDGQPVKVWQASVIEDATQSLPGTILAATKQGIQVATGKGILNLLSLQPAGKKAMSAQDLLNSRREWFIPGNRLA.

A (6S)-5,6,7,8-tetrahydrofolate-binding site is contributed by 113 to 116; it reads SLLP.

This sequence belongs to the Fmt family.

It carries out the reaction L-methionyl-tRNA(fMet) + (6R)-10-formyltetrahydrofolate = N-formyl-L-methionyl-tRNA(fMet) + (6S)-5,6,7,8-tetrahydrofolate + H(+). Functionally, attaches a formyl group to the free amino group of methionyl-tRNA(fMet). The formyl group appears to play a dual role in the initiator identity of N-formylmethionyl-tRNA by promoting its recognition by IF2 and preventing the misappropriation of this tRNA by the elongation apparatus. This is Methionyl-tRNA formyltransferase from Salmonella enteritidis PT4 (strain P125109).